The following is a 263-amino-acid chain: GTP cyclohydrolase 1 type 2 homolog (263 aa).

Positions 65, 66, 104, 225, and 229 each coordinate a divalent metal cation.

Belongs to the GTP cyclohydrolase I type 2/NIF3 family. As to quaternary structure, homohexamer.

The chain is GTP cyclohydrolase 1 type 2 homolog from Nostoc sp. (strain PCC 7120 / SAG 25.82 / UTEX 2576).